Consider the following 366-residue polypeptide: 3-isopropylmalate dehydrogenase (366 aa).

78 to 91 lines the NAD(+) pocket; it reads GPKWEDLPSHLQPE. Positions 99, 109, 138, and 227 each coordinate substrate. The Mg(2+) site is built by D227, D251, and D255. 285–297 provides a ligand contact to NAD(+); it reads GSAPDIKGKNIAN.

This sequence belongs to the isocitrate and isopropylmalate dehydrogenases family. LeuB type 1 subfamily. In terms of assembly, homodimer. The cofactor is Mg(2+). Mn(2+) serves as cofactor.

The protein localises to the cytoplasm. It catalyses the reaction (2R,3S)-3-isopropylmalate + NAD(+) = 4-methyl-2-oxopentanoate + CO2 + NADH. The protein operates within amino-acid biosynthesis; L-leucine biosynthesis; L-leucine from 3-methyl-2-oxobutanoate: step 3/4. Catalyzes the oxidation of 3-carboxy-2-hydroxy-4-methylpentanoate (3-isopropylmalate) to 3-carboxy-4-methyl-2-oxopentanoate. The product decarboxylates to 4-methyl-2 oxopentanoate. In Buchnera aphidicola subsp. Baizongia pistaciae (strain Bp), this protein is 3-isopropylmalate dehydrogenase.